We begin with the raw amino-acid sequence, 155 residues long: SsrA-binding protein (155 aa).

This sequence belongs to the SmpB family.

The protein localises to the cytoplasm. Its function is as follows. Required for rescue of stalled ribosomes mediated by trans-translation. Binds to transfer-messenger RNA (tmRNA), required for stable association of tmRNA with ribosomes. tmRNA and SmpB together mimic tRNA shape, replacing the anticodon stem-loop with SmpB. tmRNA is encoded by the ssrA gene; the 2 termini fold to resemble tRNA(Ala) and it encodes a 'tag peptide', a short internal open reading frame. During trans-translation Ala-aminoacylated tmRNA acts like a tRNA, entering the A-site of stalled ribosomes, displacing the stalled mRNA. The ribosome then switches to translate the ORF on the tmRNA; the nascent peptide is terminated with the 'tag peptide' encoded by the tmRNA and targeted for degradation. The ribosome is freed to recommence translation, which seems to be the essential function of trans-translation. The polypeptide is SsrA-binding protein (Streptococcus suis (strain 98HAH33)).